A 194-amino-acid chain; its full sequence is FMN-dependent NADH:quinone oxidoreductase (194 aa).

Residues Ser-10 and Met-90–Leu-93 each bind FMN.

This sequence belongs to the azoreductase type 1 family. As to quaternary structure, homodimer. FMN is required as a cofactor.

It carries out the reaction 2 a quinone + NADH + H(+) = 2 a 1,4-benzosemiquinone + NAD(+). The catalysed reaction is N,N-dimethyl-1,4-phenylenediamine + anthranilate + 2 NAD(+) = 2-(4-dimethylaminophenyl)diazenylbenzoate + 2 NADH + 2 H(+). Functionally, quinone reductase that provides resistance to thiol-specific stress caused by electrophilic quinones. Its function is as follows. Also exhibits azoreductase activity. Catalyzes the reductive cleavage of the azo bond in aromatic azo compounds to the corresponding amines. In Haemophilus influenzae (strain PittEE), this protein is FMN-dependent NADH:quinone oxidoreductase.